The sequence spans 794 residues: Protein argonaute-4 (794 aa).

The region spanning 152 to 271 is the PAZ domain; that stretch reads PIIEFMCEVL…LPLEVCNIVA (120 aa). The Piwi domain maps to 442–753; that stretch reads LIVVILPGKT…VAFRARYHLV (312 aa). The tract at residues 758–779 is disordered; sequence DSAEGSHVSGQSNGRDPQALAK.

This sequence belongs to the argonaute family. Ago subfamily.

Its subcellular location is the cytoplasm. It is found in the P-body. Functionally, required for RNA-mediated gene silencing (RNAi). Binds to short RNAs such as microRNAs (miRNAs) and represses the translation of mRNAs which are complementary to them. Lacks endonuclease activity and does not appear to cleave target mRNAs. This chain is Protein argonaute-4 (AGO4), found in Gallus gallus (Chicken).